A 248-amino-acid polypeptide reads, in one-letter code: Pyridoxine 5'-phosphate synthase (248 aa).

3-amino-2-oxopropyl phosphate is bound at residue Asn12. 14 to 15 (DH) contacts 1-deoxy-D-xylulose 5-phosphate. Residue Arg23 coordinates 3-amino-2-oxopropyl phosphate. The Proton acceptor role is filled by His48. Residues Arg50 and His55 each coordinate 1-deoxy-D-xylulose 5-phosphate. The Proton acceptor role is filled by Glu75. Thr105 is a 1-deoxy-D-xylulose 5-phosphate binding site. His196 (proton donor) is an active-site residue. Residues Gly197 and 218–219 (GH) each bind 3-amino-2-oxopropyl phosphate.

The protein belongs to the PNP synthase family. As to quaternary structure, homooctamer; tetramer of dimers.

Its subcellular location is the cytoplasm. It catalyses the reaction 3-amino-2-oxopropyl phosphate + 1-deoxy-D-xylulose 5-phosphate = pyridoxine 5'-phosphate + phosphate + 2 H2O + H(+). Its pathway is cofactor biosynthesis; pyridoxine 5'-phosphate biosynthesis; pyridoxine 5'-phosphate from D-erythrose 4-phosphate: step 5/5. Catalyzes the complicated ring closure reaction between the two acyclic compounds 1-deoxy-D-xylulose-5-phosphate (DXP) and 3-amino-2-oxopropyl phosphate (1-amino-acetone-3-phosphate or AAP) to form pyridoxine 5'-phosphate (PNP) and inorganic phosphate. The protein is Pyridoxine 5'-phosphate synthase of Stutzerimonas stutzeri (strain A1501) (Pseudomonas stutzeri).